Here is a 588-residue protein sequence, read N- to C-terminus: Histone deacetylase 9 (588 aa).

Phosphoserine is present on serine 22. Residues 23–27 (PLDLR) form an interaction with CTBP1 region. Basic and acidic residues predominate over residues 110 to 147 (RQEQEVERHRREQQLPPLRGKDRGRERAVASTEVKQKL). Disordered regions lie at residues 110–170 (RQEQ…HSVG), 183–242 (TSLD…SSPL), and 264–301 (SSVS…PHPE). Residues 136–154 (RAVASTEVKQKLQEFLLSK) form an interaction with MEF2 region. Composition is skewed to polar residues over residues 154–166 (KSAT…NGKN) and 185–199 (LDQS…SPSY). The segment at 175 to 343 (LWYTAAHHTS…LPAVPSPLNA (169 aa)) is interaction with MAPK10. A compositionally biased stretch (basic and acidic residues) spans 208–219 (DSKDDFPLRKTA). An interaction with ETV6 region spans residues 218-261 (TASEPNLKVRSRLKQKVAERRSSPLLRRKDGNLVTSFKKRVFEV). Serine 220 is modified (phosphoserine). Residues 233–242 (KVAERRSSPL) are compositionally biased toward basic and acidic residues. Residue serine 240 is modified to Phosphoserine; by DYRK1B. Over residues 264–284 (SSVSSSSPGSGPSSPNNGPAG) the composition is skewed to low complexity. A Phosphoserine modification is found at serine 450. Residues 493-533 (QLKQPGSHLEEAEEELQGDQSMEDRAASKDNSARSDSSACV) form a disordered region. The span at 514–525 (MEDRAASKDNSA) shows a compositional bias: basic and acidic residues. Serine 552 is modified (phosphoserine).

This sequence belongs to the histone deacetylase family. HD type 2 subfamily. Homodimer. Interacts with ETV6. Interacts with MEF2, HDAC1, HDAC3, HDAC4, HDAC5, CTBP1 and MAPK10. The phosphorylated form interacts with 14-3-3. Interacts with FOXP3 in the absence of T-cell stimulation. Post-translationally, sumoylated. Phosphorylated on Ser-220 and Ser-450; which promotes 14-3-3-binding, impairs interaction with MEF2, and antagonizes antimyogenic activity. Phosphorylated on Ser-240 by DYRK1B; which impairs nuclear accumulation. Phosphorylated by the PKC kinases PKN1 and PKN2, impairing nuclear import. In terms of tissue distribution, expressed at high levels in heart, brain and spleen. Expressed in skeletal muscle.

The protein localises to the nucleus. The enzyme catalyses N(6)-acetyl-L-lysyl-[histone] + H2O = L-lysyl-[histone] + acetate. Functionally, devoided of intrinsic deacetylase activity, promotes the deacetylation of lysine residues on the N-terminal part of the core histones (H2A, H2B, H3 and H4) by recruiting HDAC1 and HDAC3. Histone deacetylation gives a tag for epigenetic repression and plays an important role in transcriptional regulation, cell cycle progression and developmental events. Represses MEF2-dependent transcription, inhibits skeletal myogenesis and may be involved in heart development. Protects neurons from apoptosis, both by inhibiting JUN phosphorylation by MAPK10 and by repressing JUN transcription via HDAC1 recruitment to JUN promoter. This chain is Histone deacetylase 9 (Hdac9), found in Mus musculus (Mouse).